The chain runs to 358 residues: Cyanide hydratase (358 aa).

A CN hydrolase domain is found at 8–287; sequence YKAAAVNAEP…QGLLFVDIDL (280 aa). Residue Glu-48 is the Proton acceptor of the active site. The active site involves Lys-130. Cys-165 serves as the catalytic Nucleophile.

The protein belongs to the carbon-nitrogen hydrolase superfamily. Nitrilase family. Oligomer of dimers, forming left-handed helical fibers.

It catalyses the reaction formamide = hydrogen cyanide + H2O. Its function is as follows. Catalyzes the hydration of cyanide to formamide. Degradation of cyanide may be important for plant pathogenic fungi in infection of cyanogenic plants. The polypeptide is Cyanide hydratase (Penicillium rubens (strain ATCC 28089 / DSM 1075 / NRRL 1951 / Wisconsin 54-1255) (Penicillium chrysogenum)).